We begin with the raw amino-acid sequence, 508 residues long: MMMTKQKNSLAERLNIGEEVRELKLGATFNPKNTSTAFHTIKYDFKPASVDTSRMASVDVGSNNQVTVTVPNSESSGVPHTVYKGNQREYAKECLMIYDKETGAITIEKLNHNIQVKKTRNEVANKSVQLPGQNASVNMGQGQLHSQGANGSVPGPISAPGHSTGTAPKMENSTMRISTKTKVSTGSRRNNIIDFKPRNSPMQQSSPSRAVPVHRSPQSAPAWDANNAQQTLPSIPLITDDDDFGLRAALHNSGHANTSGSSTGSATGQPDFGSTSSSSHMGKQRQAPPHGHGKRQQMQQRLSPPMAQQQQPSNYGRGYNGGHNHVQQQQQRNSPQQQRPPAYGHGNSMPMDLDSTREHELTSQSVAQAAAALEQQIGGALSASSSSSESDSSDSDSGSDSDDSTEDDRPTQGQQQDHQQQQQQQVYQNHNHQQQQIAQQHLNQLPNLGLGSISPAYGSNHQHQQQMAPHQQQQKQQSGIYASNGGFPNDLLQNDLQLSSNSSDDDDE.

Composition is skewed to polar residues over residues 140–150 and 161–190; these read GQGQLHSQGAN and GHST…SRRN. 2 disordered regions span residues 140–226 and 251–508; these read GQGQ…WDAN and HNSG…DDDE. A Phosphoserine modification is found at serine 200. Low complexity predominate over residues 251–268; sequence HNSGHANTSGSSTGSATG. Composition is skewed to polar residues over residues 272–281 and 296–313; these read FGSTSSSSHM and QQMQ…QQPS. Residues 314 to 341 show a composition bias toward low complexity; sequence NYGRGYNGGHNHVQQQQQRNSPQQQRPP. The span at 391 to 406 shows a compositional bias: acidic residues; the sequence is DSSDSDSGSDSDDSTE. Low complexity-rich tracts occupy residues 412–444, 461–477, and 489–502; these read QGQQ…HLNQ, HQHQ…QKQQ, and NDLL…SSNS.

The protein belongs to the EAF family.

It localises to the nucleus. Its function is as follows. Promotes transcriptional elongation by Su(Tpl)/ELL. Essential for development. The chain is Ell-associated factor Eaf from Drosophila erecta (Fruit fly).